The sequence spans 634 residues: 1-deoxy-D-xylulose-5-phosphate synthase (634 aa).

Residues His-74 and 115–117 (AHS) each bind thiamine diphosphate. Position 146 (Asp-146) interacts with Mg(2+). Thiamine diphosphate contacts are provided by residues 147 to 148 (GA), Asn-176, Tyr-283, and Glu-365. Mg(2+) is bound at residue Asn-176.

It belongs to the transketolase family. DXPS subfamily. As to quaternary structure, homodimer. The cofactor is Mg(2+). It depends on thiamine diphosphate as a cofactor.

It carries out the reaction D-glyceraldehyde 3-phosphate + pyruvate + H(+) = 1-deoxy-D-xylulose 5-phosphate + CO2. It participates in metabolic intermediate biosynthesis; 1-deoxy-D-xylulose 5-phosphate biosynthesis; 1-deoxy-D-xylulose 5-phosphate from D-glyceraldehyde 3-phosphate and pyruvate: step 1/1. Catalyzes the acyloin condensation reaction between C atoms 2 and 3 of pyruvate and glyceraldehyde 3-phosphate to yield 1-deoxy-D-xylulose-5-phosphate (DXP). In Burkholderia lata (strain ATCC 17760 / DSM 23089 / LMG 22485 / NCIMB 9086 / R18194 / 383), this protein is 1-deoxy-D-xylulose-5-phosphate synthase.